A 130-amino-acid chain; its full sequence is uncharacterized protein (130 aa).

This is an uncharacterized protein from Sulfolobus islandicus filamentous virus (isolate Iceland/Hveragerdi) (SIFV).